Reading from the N-terminus, the 382-residue chain is Pyrimidine monooxygenase RutA (382 aa).

Residues Ile68–Lys69, Asn134, Glu143, Arg159–Tyr160, and Ser209 contribute to the FMN site.

The protein belongs to the NtaA/SnaA/DszA monooxygenase family. RutA subfamily.

It catalyses the reaction uracil + FMNH2 + NADH + O2 = (Z)-3-ureidoacrylate + FMN + NAD(+) + H2O + H(+). It carries out the reaction thymine + FMNH2 + NADH + O2 = (Z)-2-methylureidoacrylate + FMN + NAD(+) + H2O + H(+). Functionally, catalyzes the pyrimidine ring opening between N-3 and C-4 by an unusual flavin hydroperoxide-catalyzed mechanism, adding oxygen atoms in the process to yield ureidoacrylate peracid, that immediately reacts with FMN forming ureidoacrylate and FMN-N(5)-oxide. The FMN-N(5)-oxide reacts spontaneously with NADH to produce FMN. Requires the flavin reductase RutF to regenerate FMN in vivo. This Escherichia coli (strain SE11) protein is Pyrimidine monooxygenase RutA.